Consider the following 547-residue polypeptide: MTKTDPAPMAPPPRGEEEEEEEEDEPVPEAPSPTQERRQKPVVHPSAPAPLPKDYAFTFFDPNDPACQEILFDPKTTIPELFAIVRQWVPQVQHKIDVIGNEILRRGCHVNDRDGLTDMTLLHYACKAGAHGVGDPAAAVRLSQQLLALGADVTLRSRWTNMNALHYAAYFDVPDLVRVLLKGARPRVVNSTCSDFNHGSALHIAASNLCLGAAKCLLEHGANPALRNRKGQVPAEVVPDPMDMSLDKAEAALVAKELRTLLEEAVPLSCTLPKVTLPNYDNVPGNLMLSALGLRLGDRVLLDGQKTGTLRFCGTTEFASGQWVGVELDEPEGKNDGSVGGVRYFICPPKQGLFASVSKVSKAVDAPPSSVTSTPRTPRMDFSRVTGKGRREHKGKKKSPSSPSLGSLQQREGAKAEVGDQVLVAGQKQGIVRFYGKTDFAPGYWYGIELDQPTGKHDGSVFGVRYFTCAPRHGVFAPASRIQRIGGSTDPPGDSVGAKKVHQVTMTQPKRTFTTVRTPKDIASENSISRLLFCCWFPWMLRAEMQS.

Residues 1 to 49 (MTKTDPAPMAPPPRGEEEEEEEEDEPVPEAPSPTQERRQKPVVHPSAPA) are disordered. Residues 16-27 (EEEEEEEEDEPV) show a composition bias toward acidic residues. ANK repeat units follow at residues 117 to 158 (TDMT…LRSR), 160 to 191 (TNMN…VVNS), and 197 to 229 (NHGS…LRNR). A CAP-Gly 1 domain is found at 314–356 (GTTEFASGQWVGVELDEPEGKNDGSVGGVRYFICPPKQGLFAS). The segment at 365–413 (DAPPSSVTSTPRTPRMDFSRVTGKGRREHKGKKKSPSSPSLGSLQQREG) is disordered. Low complexity predominate over residues 367–377 (PPSSVTSTPRT). At Thr-374 the chain carries Phosphothreonine. Basic residues predominate over residues 387 to 399 (GKGRREHKGKKKS). Phosphoserine occurs at positions 399 and 401. In terms of domain architecture, CAP-Gly 2 spans 436 to 478 (GKTDFAPGYWYGIELDQPTGKHDGSVFGVRYFTCAPRHGVFAP). Positions 488–547 (STDPPGDSVGAKKVHQVTMTQPKRTFTTVRTPKDIASENSISRLLFCCWFPWMLRAEMQS) are goLD. S-palmitoyl cysteine attachment occurs at residues Cys-534 and Cys-535.

Homodimer. Interacts with AKT1 and AKT2; when AKT1 and AKT2 are phosphorylated and activated, affinity is higher for AKT2. Interacts with ZDHHC13 (via ANK repeats). Interacts with ZDHHC17 (via ANK repeats). Palmitoylation by ZDHHC17 regulates association with the plasma membrane.

The protein localises to the cell membrane. It is found in the cytoplasm. The protein resides in the golgi apparatus. Its subcellular location is the golgi stack. Functions as a cytoplasmic linker protein. Involved in TGN-endosome dynamics. May modulate the cellular compartmentalization of AKT kinase family and promote its cell membrane localization, thereby playing a role in glucose transport in adipocytes. In Mus musculus (Mouse), this protein is CAP-Gly domain-containing linker protein 3 (Clip3).